An 89-amino-acid polypeptide reads, in one-letter code: Large ribosomal subunit protein uL23c (89 aa).

The protein belongs to the universal ribosomal protein uL23 family. As to quaternary structure, part of the 50S ribosomal subunit.

It is found in the plastid. It localises to the chloroplast. In terms of biological role, binds to 23S rRNA. The sequence is that of Large ribosomal subunit protein uL23c (rpl23) from Staurastrum punctulatum (Green alga).